The sequence spans 880 residues: Alanine--tRNA ligase (880 aa).

Zn(2+) is bound by residues H566, H570, C668, and H672.

Belongs to the class-II aminoacyl-tRNA synthetase family. Zn(2+) is required as a cofactor.

The protein resides in the cytoplasm. The catalysed reaction is tRNA(Ala) + L-alanine + ATP = L-alanyl-tRNA(Ala) + AMP + diphosphate. In terms of biological role, catalyzes the attachment of alanine to tRNA(Ala) in a two-step reaction: alanine is first activated by ATP to form Ala-AMP and then transferred to the acceptor end of tRNA(Ala). Also edits incorrectly charged Ser-tRNA(Ala) and Gly-tRNA(Ala) via its editing domain. The sequence is that of Alanine--tRNA ligase from Trichormus variabilis (strain ATCC 29413 / PCC 7937) (Anabaena variabilis).